We begin with the raw amino-acid sequence, 339 residues long: MRVAVDGMGGDHSPSAVVEGCVQALEEFKDIEIYITGPEDLLKEAFSKFKYDKERVVFIDAKEVISTNEHPAMAVKKKKDSSLVKALRLVKDNQCEAVISAGSTGAFLTGCTLIVGRIKGVERPALAPVMPGKNGPFMIIDAGANVDSKPSYLVQFAKMGEVYFKSVMDVNNPKVGLVNIGEEEEKGNDLTKATYKLLKEEKDINFIGNVEPREVSTGDVDVLVCDGFVGNTVLKMYEGVASTILSMIKSEVKSSFLAKLGVPFLAPALMNLKKKMDYKEYGGAPFLGVKGICVKAHGSSDAKAFKNAIRQARKFHENDLIGKLSEEITKKSFDNQKNI.

Belongs to the PlsX family. In terms of assembly, homodimer. Probably interacts with PlsY.

It localises to the cytoplasm. The enzyme catalyses a fatty acyl-[ACP] + phosphate = an acyl phosphate + holo-[ACP]. It participates in lipid metabolism; phospholipid metabolism. In terms of biological role, catalyzes the reversible formation of acyl-phosphate (acyl-PO(4)) from acyl-[acyl-carrier-protein] (acyl-ACP). This enzyme utilizes acyl-ACP as fatty acyl donor, but not acyl-CoA. The polypeptide is Phosphate acyltransferase (Clostridium perfringens (strain ATCC 13124 / DSM 756 / JCM 1290 / NCIMB 6125 / NCTC 8237 / Type A)).